A 98-amino-acid chain; its full sequence is Large ribosomal subunit protein uL23 (98 aa).

The protein belongs to the universal ribosomal protein uL23 family. As to quaternary structure, part of the 50S ribosomal subunit. Contacts protein L29, and trigger factor when it is bound to the ribosome.

One of the early assembly proteins it binds 23S rRNA. One of the proteins that surrounds the polypeptide exit tunnel on the outside of the ribosome. Forms the main docking site for trigger factor binding to the ribosome. This is Large ribosomal subunit protein uL23 from Dinoroseobacter shibae (strain DSM 16493 / NCIMB 14021 / DFL 12).